Consider the following 168-residue polypeptide: Variant surface antigen D (168 aa).

The N-terminal stretch at 1–29 is a signal peptide; that stretch reads MKKSIFSKKLLVSFGSLVTLAAIPLIAIS. The N-palmitoyl cysteine moiety is linked to residue Cys-30. Residue Cys-30 is the site of S-diacylglycerol cysteine attachment. The interval 33 to 168 is disordered; that stretch reads TNTDQSQQPG…STSTSNMNTR (136 aa). Low complexity-rich tracts occupy residues 35–44 and 52–71; these read TDQSQQPGSG and GTTT…ESGT. Residues 72–81 are compositionally biased toward gly residues; the sequence is TTGGQTGTTT. A run of 7 repeats spans residues 81–92, 93–104, 105–116, 117–128, 129–140, 141–152, and 153–164. The tract at residues 81 to 164 is 7 X 12 AA tandem repeats; the sequence is TGGQSDSTST…GSSDSTSTSN (84 aa). Residues 82-168 show a composition bias toward low complexity; the sequence is GGQSDSTSTS…STSTSNMNTR (87 aa).

It localises to the cell membrane. Its function is as follows. Responsible for the antigenic diversity for host adaptation. Expression in E.coli of a construct containing vlpD, vlpE, and vlpF yields antigenically distinguishable products corresponding to each gene. The chain is Variant surface antigen D (vlpD) from Mesomycoplasma hyorhinis (Mycoplasma hyorhinis).